Consider the following 1034-residue polypeptide: Beta-galactosidase (1034 aa).

Asn-108 and Asp-207 together coordinate substrate. Asp-207 is a binding site for Na(+). Glu-423, His-425, and Glu-468 together coordinate Mg(2+). Residues Glu-468 and 544-547 (EYAH) each bind substrate. The Proton donor role is filled by Glu-468. Glu-544 serves as the catalytic Nucleophile. Mg(2+) is bound at residue Asn-604. Residues Phe-608 and Asn-611 each contribute to the Na(+) site. Substrate is bound by residues Asn-611 and Trp-1010.

This sequence belongs to the glycosyl hydrolase 2 family. In terms of assembly, homotetramer. Mg(2+) is required as a cofactor. Na(+) serves as cofactor.

The catalysed reaction is Hydrolysis of terminal non-reducing beta-D-galactose residues in beta-D-galactosides.. The sequence is that of Beta-galactosidase from Klebsiella pneumoniae.